The primary structure comprises 180 residues: UPF0227 protein CKO_01948 (180 aa).

This sequence belongs to the UPF0227 family.

This is UPF0227 protein CKO_01948 from Citrobacter koseri (strain ATCC BAA-895 / CDC 4225-83 / SGSC4696).